The chain runs to 69 residues: DNA-directed RNA polymerase subunit epsilon (69 aa).

Belongs to the RNA polymerase subunit epsilon family. As to quaternary structure, RNAP is composed of a core of 2 alpha, a beta and a beta' subunit. The core is associated with a delta subunit, and at least one of epsilon or omega. When a sigma factor is associated with the core the holoenzyme is formed, which can initiate transcription.

The enzyme catalyses RNA(n) + a ribonucleoside 5'-triphosphate = RNA(n+1) + diphosphate. A non-essential component of RNA polymerase (RNAP). The polypeptide is DNA-directed RNA polymerase subunit epsilon (Halalkalibacterium halodurans (strain ATCC BAA-125 / DSM 18197 / FERM 7344 / JCM 9153 / C-125) (Bacillus halodurans)).